Here is a 55-residue protein sequence, read N- to C-terminus: Omega-ctenitoxin-Pr2a (55 aa).

5 disulfides stabilise this stretch: Cys-2-Cys-16, Cys-9-Cys-22, Cys-15-Cys-37, Cys-24-Cys-35, and Cys-45-Cys-52.

As to expression, expressed by the venom gland.

Its subcellular location is the secreted. In terms of biological role, antagonist of L-type calcium channels (Cav1/CACNA1). In vivo, causes paralysis in posterior limbs, and gradual decrease in movement and aggression during 24 hours after intracerebroventricular injection in mice at dose levels of 3 ug per mouse. The chain is Omega-ctenitoxin-Pr2a from Phoneutria reidyi (Brazilian Amazonian armed spider).